The following is a 562-amino-acid chain: Arginine--tRNA ligase (562 aa).

The 'HIGH' region motif lies at 122–132; sequence PNIAKDMHVGH.

This sequence belongs to the class-I aminoacyl-tRNA synthetase family. Monomer.

It is found in the cytoplasm. It carries out the reaction tRNA(Arg) + L-arginine + ATP = L-arginyl-tRNA(Arg) + AMP + diphosphate. The protein is Arginine--tRNA ligase of Chlamydia felis (strain Fe/C-56) (Chlamydophila felis).